Reading from the N-terminus, the 207-residue chain is Outer-membrane lipoprotein carrier protein (207 aa).

Residues 1–21 (MRLFRVLLLSAVAFALSPAQA) form the signal peptide.

It belongs to the LolA family. As to quaternary structure, monomer.

Its subcellular location is the periplasm. Participates in the translocation of lipoproteins from the inner membrane to the outer membrane. Only forms a complex with a lipoprotein if the residue after the N-terminal Cys is not an aspartate (The Asp acts as a targeting signal to indicate that the lipoprotein should stay in the inner membrane). In Azotobacter vinelandii (strain DJ / ATCC BAA-1303), this protein is Outer-membrane lipoprotein carrier protein.